Consider the following 559-residue polypeptide: S-layer protein (559 aa).

The N-terminal stretch at Met1–Ala28 is a signal peptide. Asn108, Asn130, Asn155, Asn222, and Asn373 each carry an N-linked (GlcNAc...) asparagine glycan.

This sequence belongs to the Mj S-layer protein family.

It localises to the secreted. Its subcellular location is the cell wall. It is found in the S-layer. S-layer protein. The S-layer is a paracrystalline mono-layered assembly of proteins which coat the surface of the cell. The sequence is that of S-layer protein from Methanothermococcus thermolithotrophicus (Methanococcus thermolithotrophicus).